The following is a 495-amino-acid chain: MKYSAKNTALSQIDSNIILAVFEDGELSPTAMQFDQLSQGYLTRLIQVGEVSGKQGQVLILRDIPNCQAQRIFIVGCGKKDKITERQYKQIIQKTIQTILETQASEVVSFLNEIELKNRDIHWNIRFAIETIEASFYQFDAFKTKKGDENSVLNEFIFDVQPELQQDALLAITYAQAIALGVKHAKDIANCPPNICNPTYLAEQAQSLAKHSNLINVQVLGEKEMAELNMFSYLAVSQGSANEAKMSVIEYRNHPDKNAKPIVLVGKGLTFDAGGISLKPADSMDEMKYDMCGAASVFGVMYALATLQLPLNVIGVLAGCENLPDGNSYRPGDILTTMSGLTVEVLNTDAEGRLVLCDALTYVERFNPELVIDVATLTGACVVALGQHNSGLIATDEKLAEKLLNAAEETTDKAWRLPLSEEYQEQLKSNFADLANIGGRWGGAITAGAFLANFTKNYPWAHLDIAGTAWLQGTNKGATGRPVSLLTQFLINQSK.

Residues Lys267 and Asp272 each coordinate Mn(2+). Lys279 is an active-site residue. Asp290, Asp349, and Glu351 together coordinate Mn(2+). Arg353 is a catalytic residue.

It belongs to the peptidase M17 family. Mn(2+) is required as a cofactor.

Its subcellular location is the cytoplasm. The enzyme catalyses Release of an N-terminal amino acid, Xaa-|-Yaa-, in which Xaa is preferably Leu, but may be other amino acids including Pro although not Arg or Lys, and Yaa may be Pro. Amino acid amides and methyl esters are also readily hydrolyzed, but rates on arylamides are exceedingly low.. The catalysed reaction is Release of an N-terminal amino acid, preferentially leucine, but not glutamic or aspartic acids.. In terms of biological role, presumably involved in the processing and regular turnover of intracellular proteins. Catalyzes the removal of unsubstituted N-terminal amino acids from various peptides. In Histophilus somni (strain 129Pt) (Haemophilus somnus), this protein is Probable cytosol aminopeptidase.